Here is a 92-residue protein sequence, read N- to C-terminus: Small ribosomal subunit protein uS19 (92 aa).

It belongs to the universal ribosomal protein uS19 family.

Protein S19 forms a complex with S13 that binds strongly to the 16S ribosomal RNA. This Limosilactobacillus reuteri (strain DSM 20016) (Lactobacillus reuteri) protein is Small ribosomal subunit protein uS19.